Here is a 501-residue protein sequence, read N- to C-terminus: Probable cytosol aminopeptidase (501 aa).

Residues Lys268 and Asp273 each coordinate Mn(2+). Residue Lys280 is part of the active site. Mn(2+) contacts are provided by Asp291, Asp350, and Glu352. The active site involves Arg354.

It belongs to the peptidase M17 family. It depends on Mn(2+) as a cofactor.

The protein localises to the cytoplasm. It carries out the reaction Release of an N-terminal amino acid, Xaa-|-Yaa-, in which Xaa is preferably Leu, but may be other amino acids including Pro although not Arg or Lys, and Yaa may be Pro. Amino acid amides and methyl esters are also readily hydrolyzed, but rates on arylamides are exceedingly low.. The catalysed reaction is Release of an N-terminal amino acid, preferentially leucine, but not glutamic or aspartic acids.. Its function is as follows. Presumably involved in the processing and regular turnover of intracellular proteins. Catalyzes the removal of unsubstituted N-terminal amino acids from various peptides. In Idiomarina loihiensis (strain ATCC BAA-735 / DSM 15497 / L2-TR), this protein is Probable cytosol aminopeptidase.